We begin with the raw amino-acid sequence, 258 residues long: Myelin proteolipid protein (258 aa).

The Cytoplasmic segment spans residues 1 to 22 (MFPVRHALLCKALGCYDCCIRC). 3 S-palmitoyl cysteine lipidation sites follow: C18, C19, and C22. The chain crosses the membrane as a helical span at residues 23 to 48 (LGAVPYPSLVSTLLCFTGMALFCGCG). Residues 49-82 (HEALAHTEVLVETYFVRNIQDYVILASFIKYFQY) lie on the Extracellular side of the membrane. Residues 83 to 103 (VIYGLASFFFLYCILLLAEGF) traverse the membrane as a helical segment. At 104–128 (YTTSAVKQTFGEFRSTRCGRCLSLT) the chain is on the cytoplasmic side. Residues C121 and C124 are each lipidated (S-palmitoyl cysteine). The helical transmembrane segment at 129 to 149 (FIIVTYVLAVIWLAVFAFTAI) threads the bilayer. The Extracellular segment spans residues 150-218 (PSSSSLIWHR…KTKEFFVTYD (69 aa)). C181 and C200 are joined by a disulfide. The helical transmembrane segment at 219 to 239 (LYIAAFAGAGIALLALFLYVV) threads the bilayer. Residues 240–258 (ATTYNYAVLRFLGRKGLRC) lie on the Cytoplasmic side of the membrane.

It belongs to the myelin proteolipid protein family. As to expression, central nervous system. Highest levels in spinal cord and medulla oblongata.

It is found in the cell membrane. This is the major myelin protein from the central nervous system. It plays an important role in the formation or maintenance of the multilamellar structure of myelin. May be involved in neuron and glial cell differentiation. The chain is Myelin proteolipid protein (plp) from Oncorhynchus mykiss (Rainbow trout).